Here is a 425-residue protein sequence, read N- to C-terminus: Glutamyl-tRNA(Gln) amidotransferase subunit D (425 aa).

Residues 53 to 84 form a disordered region; that stretch reads ENNGEAANGGNGGKNGQKEPEPAKEKVSKPGL. Residues 68–80 are compositionally biased toward basic and acidic residues; that stretch reads GQKEPEPAKEKVS. Residues 85 to 414 form the Asparaginase/glutaminase domain; it reads PKVSILSTGG…EKAVSMLGEN (330 aa). Active-site residues include Thr95, Thr171, Asp172, and Lys248.

Belongs to the asparaginase 1 family. GatD subfamily. As to quaternary structure, heterodimer of GatD and GatE.

It carries out the reaction L-glutamyl-tRNA(Gln) + L-glutamine + ATP + H2O = L-glutaminyl-tRNA(Gln) + L-glutamate + ADP + phosphate + H(+). Its function is as follows. Allows the formation of correctly charged Gln-tRNA(Gln) through the transamidation of misacylated Glu-tRNA(Gln) in organisms which lack glutaminyl-tRNA synthetase. The reaction takes place in the presence of glutamine and ATP through an activated gamma-phospho-Glu-tRNA(Gln). The GatDE system is specific for glutamate and does not act on aspartate. In Methanosarcina mazei (strain ATCC BAA-159 / DSM 3647 / Goe1 / Go1 / JCM 11833 / OCM 88) (Methanosarcina frisia), this protein is Glutamyl-tRNA(Gln) amidotransferase subunit D.